Consider the following 617-residue polypeptide: MADSQNGKSAFFFFFVSLILLFLSPSYSDVTASESDPIPYENSDASPGVVTSSESDRQGVSLHRLEELVRNLTELVARLDAKLSETPFKVKKEITRDEIEEKAKAFSVTKYSPFWSERFEFTSAVKLDSEATCINVLPFRDHEGLSKYFAVGDSSGRVFVFLRNGDVLVEFFTTCDSPITAMVSYMSVYKNESFVVTGHQSGVILLHRLREGSIGEDLNSAVMENVGKFDGTEDGLQVTLLEVHHVGRVRYILATDLSGKLTVFTENRTVYGSVSPTSRPLVFLKQRLLFLTETGAGSLDLRSMKIRESECEGLNHSLARSYVFDASERAKAYGFTSEGEIIHVLLLGDIMNFKCRVRSKKKVQMEEPVALQAIKGYLLIVNQEKVFVYNVSTQHYVRTTGPRLLFPAALEDIRSTFLSHRESTKTTDHQKLEKVTPLIASDREKLLVMGLGDGYVATYKSKLPISKAEFNTMLWSSPVFFFILFLFGAWHFFSKKKESLTAWGPDDPFSSTTMSSSSTTTAQNSSAFSESTRRNDDHMDLRRRYVSPSRYPPGAATGAYRSVGSNDPSSRAPVETTNYRTTAQEMKYRGGSGLDSGGFGKRRESLFGNNKALDDES.

Residues 10–30 (AFFFFFVSLILLFLSPSYSDV) form a helical membrane-spanning segment. Residues 34 to 58 (ESDPIPYENSDASPGVVTSSESDRQ) are disordered. A compositionally biased stretch (polar residues) spans 43–53 (SDASPGVVTSS). The stretch at 60 to 86 (VSLHRLEELVRNLTELVARLDAKLSET) forms a coiled coil. Residues 473-493 (MLWSSPVFFFILFLFGAWHFF) traverse the membrane as a helical segment. Residues 511–529 (STTMSSSSTTTAQNSSAFS) show a composition bias toward low complexity. The segment at 511 to 617 (STTMSSSSTT…GNNKALDDES (107 aa)) is disordered. Positions 531–543 (STRRNDDHMDLRR) are enriched in basic and acidic residues. The span at 563–584 (VGSNDPSSRAPVETTNYRTTAQ) shows a compositional bias: polar residues. Over residues 590 to 599 (GGSGLDSGGF) the composition is skewed to gly residues.

It localises to the membrane. This is an uncharacterized protein from Arabidopsis thaliana (Mouse-ear cress).